Here is a 76-residue protein sequence, read N- to C-terminus: uncharacterized protein (76 aa).

This is an uncharacterized protein from Saccharomyces cerevisiae (strain ATCC 204508 / S288c) (Baker's yeast).